The following is a 628-amino-acid chain: tRNA uridine 5-carboxymethylaminomethyl modification enzyme MnmG (628 aa).

FAD is bound by residues 14-19 (GAGHAG), Val-126, and Ser-181. Residue 273–287 (GPRYCPSIEDKVVRF) coordinates NAD(+). Gln-370 is an FAD binding site.

It belongs to the MnmG family. In terms of assembly, homodimer. Heterotetramer of two MnmE and two MnmG subunits. Requires FAD as cofactor.

The protein localises to the cytoplasm. Its function is as follows. NAD-binding protein involved in the addition of a carboxymethylaminomethyl (cmnm) group at the wobble position (U34) of certain tRNAs, forming tRNA-cmnm(5)s(2)U34. This is tRNA uridine 5-carboxymethylaminomethyl modification enzyme MnmG from Bacillus subtilis (strain 168).